A 161-amino-acid polypeptide reads, in one-letter code: ATP synthase subunit b 1 (161 aa).

Residues 5–25 traverse the membrane as a helical segment; that stretch reads PETWVAIAFLLLMGVFAYVGV.

Belongs to the ATPase B chain family. As to quaternary structure, F-type ATPases have 2 components, F(1) - the catalytic core - and F(0) - the membrane proton channel. F(1) has five subunits: alpha(3), beta(3), gamma(1), delta(1), epsilon(1). F(0) has three main subunits: a(1), b(2) and c(10-14). The alpha and beta chains form an alternating ring which encloses part of the gamma chain. F(1) is attached to F(0) by a central stalk formed by the gamma and epsilon chains, while a peripheral stalk is formed by the delta and b chains.

It is found in the cell inner membrane. In terms of biological role, f(1)F(0) ATP synthase produces ATP from ADP in the presence of a proton or sodium gradient. F-type ATPases consist of two structural domains, F(1) containing the extramembraneous catalytic core and F(0) containing the membrane proton channel, linked together by a central stalk and a peripheral stalk. During catalysis, ATP synthesis in the catalytic domain of F(1) is coupled via a rotary mechanism of the central stalk subunits to proton translocation. Component of the F(0) channel, it forms part of the peripheral stalk, linking F(1) to F(0). In Nitrobacter winogradskyi (strain ATCC 25391 / DSM 10237 / CIP 104748 / NCIMB 11846 / Nb-255), this protein is ATP synthase subunit b 1.